A 211-amino-acid chain; its full sequence is NADH-quinone oxidoreductase subunit I (211 aa).

Residues 21–41 (PTTEQYPEQKKETAPRFHGRH) are disordered. 4Fe-4S ferredoxin-type domains lie at 43–73 (LNRH…VEGA) and 89–118 (RVYQ…MSND). [4Fe-4S] cluster is bound by residues Cys53, Cys56, Cys59, Cys63, Cys98, Cys101, Cys104, and Cys108. Positions 141–211 (RAGMESPPHP…AHGAGSERPR (71 aa)) are disordered. Residues 152–166 (RLGESETDYYTRDPD) show a composition bias toward basic and acidic residues. Positions 179 to 191 (DEADEAGEAGEAG) are enriched in acidic residues. A compositionally biased stretch (basic and acidic residues) spans 192-211 (EAERAADKVPAHGAGSERPR).

The protein belongs to the complex I 23 kDa subunit family. NDH-1 is composed of 14 different subunits. Subunits NuoA, H, J, K, L, M, N constitute the membrane sector of the complex. Requires [4Fe-4S] cluster as cofactor.

The protein localises to the cell membrane. The enzyme catalyses a quinone + NADH + 5 H(+)(in) = a quinol + NAD(+) + 4 H(+)(out). Its function is as follows. NDH-1 shuttles electrons from NADH, via FMN and iron-sulfur (Fe-S) centers, to quinones in the respiratory chain. The immediate electron acceptor for the enzyme in this species is believed to be ubiquinone. Couples the redox reaction to proton translocation (for every two electrons transferred, four hydrogen ions are translocated across the cytoplasmic membrane), and thus conserves the redox energy in a proton gradient. This is NADH-quinone oxidoreductase subunit I from Parafrankia sp. (strain EAN1pec).